Here is a 334-residue protein sequence, read N- to C-terminus: 6-phosphogluconolactonase (334 aa).

It belongs to the cycloisomerase 2 family.

It catalyses the reaction 6-phospho-D-glucono-1,5-lactone + H2O = 6-phospho-D-gluconate + H(+). Its pathway is carbohydrate degradation; pentose phosphate pathway; D-ribulose 5-phosphate from D-glucose 6-phosphate (oxidative stage): step 2/3. Its function is as follows. Catalyzes the hydrolysis of 6-phosphogluconolactone to 6-phosphogluconate. The chain is 6-phosphogluconolactonase from Buchnera aphidicola subsp. Acyrthosiphon pisum (strain Tuc7).